An 80-amino-acid chain; its full sequence is Toxin Acra1 (80 aa).

The signal sequence occupies residues 1–22 (MMKLVLFSIIVILFSLIGSIHG). In terms of domain architecture, LCN-type CS-alpha/beta spans 25–80 (VPGNYPLDSSGNKYPCTVLGDNQSCIDVCKKHGVKYGYCYSFKCWCEFLEDKNVSI). 3 cysteine pairs are disulfide-bonded: C40-C63, C49-C68, and C53-C70.

As to expression, expressed by the venom gland.

The protein resides in the secreted. Probable neurotoxin that inhibits ion channels. Is toxic to mice. Is about 2.8% of the total protein in the venom. This Androctonus crassicauda (Arabian fat-tailed scorpion) protein is Toxin Acra1.